The primary structure comprises 331 residues: GTP 3',8-cyclase (331 aa).

One can recognise a Radical SAM core domain in the interval 1–231 (MNAVDYLRIS…DGQVQGNGPA (231 aa)). Arg-8 is a binding site for GTP. [4Fe-4S] cluster is bound by residues Cys-15 and Cys-19. Tyr-21 is an S-adenosyl-L-methionine binding site. Cys-22 lines the [4Fe-4S] cluster pocket. Arg-60 contributes to the GTP binding site. Gly-64 is an S-adenosyl-L-methionine binding site. Thr-91 serves as a coordination point for GTP. Ser-115 provides a ligand contact to S-adenosyl-L-methionine. Lys-157 serves as a coordination point for GTP. Met-191 serves as a coordination point for S-adenosyl-L-methionine. 2 residues coordinate [4Fe-4S] cluster: Cys-254 and Cys-257. Residue 259–261 (RMR) coordinates GTP. Cys-271 serves as a coordination point for [4Fe-4S] cluster.

It belongs to the radical SAM superfamily. MoaA family. As to quaternary structure, monomer and homodimer. The cofactor is [4Fe-4S] cluster.

The catalysed reaction is GTP + AH2 + S-adenosyl-L-methionine = (8S)-3',8-cyclo-7,8-dihydroguanosine 5'-triphosphate + 5'-deoxyadenosine + L-methionine + A + H(+). It participates in cofactor biosynthesis; molybdopterin biosynthesis. Functionally, catalyzes the cyclization of GTP to (8S)-3',8-cyclo-7,8-dihydroguanosine 5'-triphosphate. This is GTP 3',8-cyclase from Acaryochloris marina (strain MBIC 11017).